Consider the following 288-residue polypeptide: Pantothenate synthetase (288 aa).

30-37 (MGNLHEGH) contacts ATP. The active-site Proton donor is the histidine 37. Glutamine 61 serves as a coordination point for (R)-pantoate. Beta-alanine is bound at residue glutamine 61. An ATP-binding site is contributed by 148-151 (GQKD). Glutamine 154 lines the (R)-pantoate pocket. ATP-binding positions include valine 177 and 185 to 188 (LSSR).

The protein belongs to the pantothenate synthetase family. In terms of assembly, homodimer.

It is found in the cytoplasm. The enzyme catalyses (R)-pantoate + beta-alanine + ATP = (R)-pantothenate + AMP + diphosphate + H(+). It functions in the pathway cofactor biosynthesis; (R)-pantothenate biosynthesis; (R)-pantothenate from (R)-pantoate and beta-alanine: step 1/1. Functionally, catalyzes the condensation of pantoate with beta-alanine in an ATP-dependent reaction via a pantoyl-adenylate intermediate. In Psychrobacter arcticus (strain DSM 17307 / VKM B-2377 / 273-4), this protein is Pantothenate synthetase.